We begin with the raw amino-acid sequence, 589 residues long: Growth factor receptor-bound protein 10 (589 aa).

2 disordered regions span residues 1 to 51 and 77 to 107; these read MALA…EDDV and LHNG…VPRS. The residue at position 99 (Ser99) is a Phosphoserine. Residue Ser145 is modified to Phosphoserine; by MTOR, MAPK1 and MAPK3. Residues 161 to 245 enclose the Ras-associating domain; the sequence is AKQDVKVFSE…SKFLFRKNYA (85 aa). The PH domain maps to 285–394; it reads CPEIQGFLHV…WMTAFRLLKY (110 aa). Ser413 is subject to Phosphoserine; by MAPK1 and MAPK3; in vitro. Ser423 is subject to Phosphoserine; by MTOR and PKB/AKT1. Ser426 is modified (phosphoserine). Ser471 carries the phosphoserine; by MTOR, MAPK1 and MAPK3 modification. Residues 488 to 584 enclose the SH2 domain; it reads WFHGRISREE…VLPCKLKHHC (97 aa).

Belongs to the GRB7/10/14 family. In terms of assembly, interacts with ligand-activated tyrosine kinase receptors, including FGFR1, INSR, IGF1R, MET and PDGFRB in a phosphotyrosine-dependent manner through the SH2 domain. Poorly binds to the EGFR. Directly interacts with MAP3K14/NIK and is recruited to the EGFR-ERBB2 complex. Interacts with GIGYF1/PERQ1 and GIGYF2/TNRC15. When unphosphorylated, interacts with AKT1 and when phosphorylated with YWHAE/14-3-3 epsilon. Interacts with NEDD4. Interacts with LRP6, thus interfering with the binding of AXIN1 to LRP6. Binds relatively non-specifically to several phosphoinositides, including PI(5)P, PI(4,5)P2, PI(3,4)P2 and PI(3,4,5)P3, with modest affinities through the PH domain. Binds to activated NRAS. In terms of processing, phosphorylated on serine residues upon EGF, FGF and PDGF stimulation.

It is found in the cytoplasm. Phosphorylation by mTORC1 stabilizes and activates GRB10 constituting a feedback pathway by which mTORC1 inhibits INSR-dependent signaling. Adapter protein which modulates coupling of a number of cell surface receptor kinases with specific signaling pathways. Binds to, and suppress signals from, activated receptors tyrosine kinases, including the insulin (INSR) and insulin-like growth factor (IGF1R) receptors. The inhibitory effect can be achieved by 2 mechanisms: interference with the signaling pathway and increased receptor degradation. Delays and reduces AKT1 phosphorylation in response to insulin stimulation. Blocks association between INSR and IRS1 and IRS2 and prevents insulin-stimulated IRS1 and IRS2 tyrosine phosphorylation. Recruits NEDD4 to IGF1R, leading to IGF1R ubiquitination, increased internalization and degradation by both the proteasomal and lysosomal pathways. A similar role in the mediation of ubiquitination also has been suggested with INSR. Negatively regulates Wnt signaling by interacting with LRP6 intracellular portion and interfering with the binding of AXIN1 to LRP6. Positive regulator of the KDR/VEGFR-2 signaling pathway. May inhibit NEDD4-mediated degradation of KDR/VEGFR-2. The sequence is that of Growth factor receptor-bound protein 10 (Grb10) from Sus scrofa (Pig).